A 210-amino-acid polypeptide reads, in one-letter code: Imidazoleglycerol-phosphate dehydratase (210 aa).

This sequence belongs to the imidazoleglycerol-phosphate dehydratase family.

It is found in the cytoplasm. It catalyses the reaction D-erythro-1-(imidazol-4-yl)glycerol 3-phosphate = 3-(imidazol-4-yl)-2-oxopropyl phosphate + H2O. It participates in amino-acid biosynthesis; L-histidine biosynthesis; L-histidine from 5-phospho-alpha-D-ribose 1-diphosphate: step 6/9. This Acidovorax ebreus (strain TPSY) (Diaphorobacter sp. (strain TPSY)) protein is Imidazoleglycerol-phosphate dehydratase.